We begin with the raw amino-acid sequence, 980 residues long: MATAATSPALKRLDLRDPAALFETHGAEEIRGLERQVRAEIEHKKEELRQMVGERYRDLIEAADTIGQMRRCAVGLVDAVKATDQYCARLRQAGSAAPRPPRAQQPQQPSQEKFYSMAAQIKLLLEIPEKIWSSMEASQCLHATQLYLLCCHLHSLLQLDSSSSRYSPVLSRFPILIRQVAAASHFRSTILHESKMLLKCQGVSDQAVAEALCSIMLLEESSPRQALTDFLLARKATIQKLLNQPHHGAGIKAQICSLVELLATTLKQAHALFYTLPEGLLPDPALPCGLLFSTLETITGQHPAGKGTGVLQEEMKLCSWFKHLPASIVEFQPTLRTLAHPISQEYLKDTLQKWIHMCNEDIKNGITNLLMYVKSMKGLAGIRDAMWELLTNESTNHSWDVLCRRLLEKPLLFWEDMMQQLFLDRLQTLTKEGFDSISSSSKELLVSALQELESSTSNSPSNKHIHFEYNMSLFLWSESPNDLPSDAAWVSVANRGQFASSGLSMKAQAISPCVQNFCSALDSKLKVKLDDLLAYLPSDDSSLPKDVSPTQAKSSAFDRYADAGTVQEMLRTQSVACIKHIVDCIRAELQSIEEGVQGQQDALNSAKLHSVLFMARLCQSLGELCPHLKQCILGKSESSEKPAREFRALRKQGKVKTQEIIPTQAKWQEVKEVLLQQSVMGYQVWSSAVVKVLIHGFTQSLLLDDAGSVLATATSWDELEIQEEAESGSSVTSKIRLPAQPSWYVQSFLFSLCQEINRVGGHALPKVTLQEMLKSCMVQVVAAYEKLSEEKQIKKEGAFPVTQNRALQLLYDLRYLNIVLTAKGDEVKSGRSKPDSRIEKVTDHLEALIDPFDLDVFTPHLNSNLHRLVQRTSVLFGLVTGTENQLAPRSSTFNSQEPHNILPLASSQIRFGLLPLSMTSTRKAKSTRNIETKAQVVPPARSTAGDPTVPGSLFRQLVSEEDNTSAPSLFKLGWLSSMTK.

N-acetylalanine is present on A2. S7 carries the post-translational modification Phosphoserine.

Belongs to the COG1 family. In terms of assembly, component of the conserved oligomeric Golgi complex which is composed of eight different subunits and is required for normal Golgi morphology and localization.

The protein localises to the golgi apparatus membrane. Functionally, required for normal Golgi function. The chain is Conserved oligomeric Golgi complex subunit 1 (COG1) from Homo sapiens (Human).